A 78-amino-acid polypeptide reads, in one-letter code: Acyl carrier protein (78 aa).

A Carrier domain is found at 1-76 (MSLEERVKEI…DVINYLKEKV (76 aa)). Serine 36 is subject to O-(pantetheine 4'-phosphoryl)serine.

Belongs to the acyl carrier protein (ACP) family. In terms of processing, 4'-phosphopantetheine is transferred from CoA to a specific serine of apo-ACP by AcpS. This modification is essential for activity because fatty acids are bound in thioester linkage to the sulfhydryl of the prosthetic group.

It is found in the cytoplasm. It functions in the pathway lipid metabolism; fatty acid biosynthesis. Carrier of the growing fatty acid chain in fatty acid biosynthesis. This chain is Acyl carrier protein, found in Aquifex aeolicus (strain VF5).